Reading from the N-terminus, the 157-residue chain is Glutaredoxin-2, mitochondrial (157 aa).

The transit peptide at 1–18 (MYWRRAALVGTRLIPVRS) directs the protein to the mitochondrion. S20 is modified (phosphoserine). The region spanning 51–151 (VNQIQETISN…PLVHQCHLKN (101 aa)) is the Glutaredoxin domain. C62 is a [2Fe-2S] cluster binding site. A glutathione-binding site is contributed by K68. An S-glutathionyl cysteine; alternate modification is found at C71. A disulfide bridge links C71 with C74. Residues Q103 and V115 each contribute to the glutathione site. Residue C147 coordinates [2Fe-2S] cluster.

It belongs to the glutaredoxin family. Monomer; active form. Homodimer; inactive form. The homodimer is probably linked by 1 2Fe-2S cluster.

The protein localises to the mitochondrion. Its activity is regulated as follows. The 2Fe-2S present in the homodimer leads to inactivation of the enzyme. The 2Fe-2S may serve as a redox sensor: the presence of one-electron oxidants or reductants leading to the loss of the 2Fe-2S cluster, subsequent monomerization and activation of the enzyme. Functionally, glutathione-dependent oxidoreductase that facilitates the maintenance of mitochondrial redox homeostasis upon induction of apoptosis by oxidative stress. Involved in response to hydrogen peroxide and regulation of apoptosis caused by oxidative stress. Acts as a very efficient catalyst of monothiol reactions because of its high affinity for protein glutathione-mixed disulfides. Can receive electrons not only from glutathione (GSH), but also from thioredoxin reductase supporting both monothiol and dithiol reactions. Efficiently catalyzes both glutathionylation and deglutathionylation of mitochondrial complex I, which in turn regulates the superoxide production by the complex. Overexpression decreases the susceptibility to apoptosis and prevents loss of cardiolipin and cytochrome c release. This is Glutaredoxin-2, mitochondrial (GLRX2) from Bos taurus (Bovine).